The primary structure comprises 174 residues: Probable NAD(P)H dehydrogenase subunit CRR3, chloroplastic (174 aa).

A chloroplast-targeting transit peptide spans 1-54 (MAVLSTIYSITRASTPTMASLTNDSPSPLPSSSPSKLPSPTSPSKKPLKLRQVS). Residues 14-24 (STPTMASLTND) are compositionally biased toward polar residues. Residues 14–71 (STPTMASLTNDSPSPLPSSSPSKLPSPTSPSKKPLKLRQVSKQMGSQNQQRRGNKPSI) form a disordered region. The segment covering 30–45 (PSSSPSKLPSPTSPSK) has biased composition (low complexity). The span at 53 to 64 (VSKQMGSQNQQR) shows a compositional bias: polar residues. A helical membrane pass occupies residues 140–160 (FTIQWILPIWIMSLLVACGVI).

The protein localises to the plastid. It localises to the chloroplast thylakoid membrane. Functionally, probable subunit of the chloroplast NAD(P)H dehydrogenase (NDH) complex of the photosynthetic electron transport chain. Required for both formation and activity of NDH. May function in assembly or stabilization of the NDH complex. This is Probable NAD(P)H dehydrogenase subunit CRR3, chloroplastic from Arabidopsis thaliana (Mouse-ear cress).